The following is a 519-amino-acid chain: Serine/threonine-protein kinase RIO1 (519 aa).

The segment covering 1-10 (MTPAPEPQDP) has biased composition (pro residues). The tract at residues 1 to 54 (MTPAPEPQDPPTIHEPVATEQTDDISDWDVESDYEDGYGAPSKSQAQGGASAAD) is disordered. Residues 21-36 (QTDDISDWDVESDYED) show a composition bias toward acidic residues. The segment covering 39–53 (GAPSKSQAQGGASAA) has biased composition (low complexity). The region spanning 122 to 519 (SEIYGTISTG…KLVAANKKRK (398 aa)) is the Protein kinase domain. ATP-binding residues include Lys-154 and Leu-228. Asp-281 (proton acceptor) is an active-site residue. Asn-286 and Asp-298 together coordinate Mg(2+). Catalysis depends on Asp-298, which acts as the 4-aspartylphosphate intermediate. The segment at 418-519 (ADSKVPESTG…KLVAANKKRK (102 aa)) is disordered. Over residues 439 to 464 (GSEDEEGDEGESGEVESGDEEREEGE) the composition is skewed to acidic residues. An association with (pre-)40S ribosomal particle region spans residues 440-519 (SEDEEGDEGE…KLVAANKKRK (80 aa)). Basic residues-rich tracts occupy residues 470–489 (KKRP…AHKM) and 497–519 (EKRK…KKRK).

This sequence belongs to the protein kinase superfamily. RIO-type Ser/Thr kinase family. Requires Mg(2+) as cofactor. In terms of processing, autophosphorylated.

Its subcellular location is the cytoplasm. The enzyme catalyses L-seryl-[protein] + ATP = O-phospho-L-seryl-[protein] + ADP + H(+). It catalyses the reaction L-threonyl-[protein] + ATP = O-phospho-L-threonyl-[protein] + ADP + H(+). It carries out the reaction ATP + H2O = ADP + phosphate + H(+). Involved in the final steps of cytoplasmic maturation of the 40S ribosomal subunit. In vitro, has strong ATPase activity and only low protein kinase activity. This is Serine/threonine-protein kinase RIO1 from Chaetomium thermophilum (strain DSM 1495 / CBS 144.50 / IMI 039719) (Thermochaetoides thermophila).